The following is a 73-amino-acid chain: Pelophylaxin-1 (73 aa).

Positions 1 to 22 (MFTMKKSLLLVFFLGTIALSLC) are cleaved as a signal peptide. The propeptide occupies 23–41 (EEERGADDDNGGEITDEEI). Residues C67 and C73 are joined by a disulfide bond.

As to expression, expressed by the skin glands.

The protein resides in the secreted. Functionally, antimicrobial peptide. This Pelophylax fukienensis (Fukien gold-striped pond frog) protein is Pelophylaxin-1.